A 161-amino-acid polypeptide reads, in one-letter code: Putative 4-hydroxy-4-methyl-2-oxoglutarate aldolase (161 aa).

Residues 78–81 and Arg100 each bind substrate; that span reads GDVI. Asp101 serves as a coordination point for a divalent metal cation.

Belongs to the class II aldolase/RraA-like family. As to quaternary structure, homotrimer. A divalent metal cation is required as a cofactor.

It carries out the reaction 4-hydroxy-4-methyl-2-oxoglutarate = 2 pyruvate. The enzyme catalyses oxaloacetate + H(+) = pyruvate + CO2. Its function is as follows. Catalyzes the aldol cleavage of 4-hydroxy-4-methyl-2-oxoglutarate (HMG) into 2 molecules of pyruvate. Also contains a secondary oxaloacetate (OAA) decarboxylase activity due to the common pyruvate enolate transition state formed following C-C bond cleavage in the retro-aldol and decarboxylation reactions. The sequence is that of Putative 4-hydroxy-4-methyl-2-oxoglutarate aldolase from Mycobacterium avium (strain 104).